We begin with the raw amino-acid sequence, 455 residues long: MFRNYTDSVQEMVLRAIDSIRDSVINASSAVSTTTLPPLDIPMTSMKPPSIIPTVELVLGTITYLVIIAMTVVGNTLVVVAVFSYRPLKKVQNYFLVSLAASDLAVAIFVMPLHVVTFLAGGKWLLGVTVCQFFTTADILLCTSSILNLCAIALDRYWAIHNPINYAQKRTTKFVCIVIVIVWILSMLISVPPIIGWNNWQENMMEDSCGLSTEKAFVVFSAAGSFFLPLLVMVVVYVKIFISARQRIRTNRGRSALMRIQNAEGDDDYRKMSIKRASVESARTSSRVGEKTPLVIADGQTTVTTLAAHSTDGGSLPKDETTKHMKYHNNGSCKVKVKDVKEDEGNPNPTAVLRKREKISVAKEKRAAKTIAVIIFVFSFCWLPFFVAYVIRPFCETCKLHAKVEQAFTWLGYINSSLNPFLYGILNLEFRRAFKKILCPKAVLEQRRRRMSAQP.

The Extracellular portion of the chain corresponds to 1 to 60 (MFRNYTDSVQEMVLRAIDSIRDSVINASSAVSTTTLPPLDIPMTSMKPPSIIPTVELVLG). Residues Asn-4 and Asn-26 are each glycosylated (N-linked (GlcNAc...) asparagine). Residues 61–83 (TITYLVIIAMTVVGNTLVVVAVF) traverse the membrane as a helical segment. Residues 84–93 (SYRPLKKVQN) are Cytoplasmic-facing. A helical membrane pass occupies residues 94–115 (YFLVSLAASDLAVAIFVMPLHV). Residues 116–133 (VTFLAGGKWLLGVTVCQF) lie on the Extracellular side of the membrane. Residues Cys-131 and Cys-209 are joined by a disulfide bond. Residues 134–154 (FTTADILLCTSSILNLCAIAL) form a helical membrane-spanning segment. Over 155 to 174 (DRYWAIHNPINYAQKRTTKF) the chain is Cytoplasmic. Residues 175–197 (VCIVIVIVWILSMLISVPPIIGW) form a helical membrane-spanning segment. The Extracellular segment spans residues 198-221 (NNWQENMMEDSCGLSTEKAFVVFS). A helical membrane pass occupies residues 222-243 (AAGSFFLPLLVMVVVYVKIFIS). Residues 244 to 370 (ARQRIRTNRG…VAKEKRAAKT (127 aa)) lie on the Cytoplasmic side of the membrane. A helical membrane pass occupies residues 371–392 (IAVIIFVFSFCWLPFFVAYVIR). Over 393–407 (PFCETCKLHAKVEQA) the chain is Extracellular. Residues 408 to 428 (FTWLGYINSSLNPFLYGILNL) form a helical membrane-spanning segment. Residues 429–455 (EFRRAFKKILCPKAVLEQRRRRMSAQP) lie on the Cytoplasmic side of the membrane.

This sequence belongs to the G-protein coupled receptor 1 family. In terms of tissue distribution, the different isoforms are expressed in specific, but overlapping sets of sensory, inter- and motor neurons, including AIY, AIZ and RIA interneurons. They are also expressed in pharyngeal cells, head muscles and excretory gland cells.

Its subcellular location is the cell membrane. Functionally, G-protein coupled receptor for tyramine, a known neurotransmitter and neuromodulator and direct precursor of octopamine. The rank order of potency is tyramine &gt; octopamine &gt; dopamine &gt; serotonin &gt; epinephrine = norepinephrine. In Caenorhabditis elegans, this protein is Tyramine receptor Ser-2 (ser-2).